We begin with the raw amino-acid sequence, 196 residues long: Peptidyl-tRNA hydrolase (196 aa).

TRNA is bound at residue histidine 15. Histidine 20 acts as the Proton acceptor in catalysis. The tRNA site is built by tyrosine 66, asparagine 68, and asparagine 114.

It belongs to the PTH family. Monomer.

Its subcellular location is the cytoplasm. It catalyses the reaction an N-acyl-L-alpha-aminoacyl-tRNA + H2O = an N-acyl-L-amino acid + a tRNA + H(+). Its function is as follows. Hydrolyzes ribosome-free peptidyl-tRNAs (with 1 or more amino acids incorporated), which drop off the ribosome during protein synthesis, or as a result of ribosome stalling. Functionally, catalyzes the release of premature peptidyl moieties from peptidyl-tRNA molecules trapped in stalled 50S ribosomal subunits, and thus maintains levels of free tRNAs and 50S ribosomes. This Polynucleobacter asymbioticus (strain DSM 18221 / CIP 109841 / QLW-P1DMWA-1) (Polynucleobacter necessarius subsp. asymbioticus) protein is Peptidyl-tRNA hydrolase.